Consider the following 156-residue polypeptide: MEKIPMTRAGYDQLDEELRELRSVQRPAVIRAIAEAREHGDLSENAEYHAAREKQSFVEGRIKELEMILSRAEVIDPTRLNGSIKFGATVTLVDEDSEEERTYQIVGEAEADLERGLLNIRSPLARALIGKDEGDSIEVVTPGGGKSYEIISIRYV.

Positions Ala-46–Glu-66 form a coiled coil.

The protein belongs to the GreA/GreB family.

Functionally, necessary for efficient RNA polymerase transcription elongation past template-encoded arresting sites. The arresting sites in DNA have the property of trapping a certain fraction of elongating RNA polymerases that pass through, resulting in locked ternary complexes. Cleavage of the nascent transcript by cleavage factors such as GreA or GreB allows the resumption of elongation from the new 3'terminus. GreA releases sequences of 2 to 3 nucleotides. The protein is Transcription elongation factor GreA of Paracoccus denitrificans (strain Pd 1222).